A 556-amino-acid polypeptide reads, in one-letter code: Arginine--tRNA ligase (556 aa).

Positions 132–142 (ANPTGDLHLGH) match the 'HIGH' region motif.

It belongs to the class-I aminoacyl-tRNA synthetase family. Monomer.

It is found in the cytoplasm. The enzyme catalyses tRNA(Arg) + L-arginine + ATP = L-arginyl-tRNA(Arg) + AMP + diphosphate. The chain is Arginine--tRNA ligase from Listeria monocytogenes serotype 4b (strain CLIP80459).